The following is a 258-amino-acid chain: Peptide methionine sulfoxide reductase A4, chloroplastic (258 aa).

The N-terminal 53 residues, 1–53 (MQVLVVSPPLIAAASLSKPLNSLSKAALSFSRAKPICPFPQTSRRPISVYKSP), are a transit peptide targeting the chloroplast. At M54 the chain carries N-acetylmethionine. Residues 62-89 (GFGSRPQAQADPSSAAIAQGPDDDVPSS) are disordered. S245 is subject to Phosphoserine.

Belongs to the MsrA Met sulfoxide reductase family. As to expression, expressed in rosette and cauline leaves, and at lower levels in stems and flowers (at protein level).

Its subcellular location is the plastid. It is found in the chloroplast stroma. It catalyses the reaction L-methionyl-[protein] + [thioredoxin]-disulfide + H2O = L-methionyl-(S)-S-oxide-[protein] + [thioredoxin]-dithiol. It carries out the reaction [thioredoxin]-disulfide + L-methionine + H2O = L-methionine (S)-S-oxide + [thioredoxin]-dithiol. Catalyzes the reduction of methionine sulfoxide (MetSO) to methionine in proteins. Plays a protective role against oxidative stress by restoring activity to proteins that have been inactivated by methionine oxidation. Prevents the methionine sulfoxidation of the heat shock protein HSP21 and its subsequent inactivation. MSRA family specifically reduces the MetSO S-enantiomer. The chain is Peptide methionine sulfoxide reductase A4, chloroplastic (MSR4) from Arabidopsis thaliana (Mouse-ear cress).